A 324-amino-acid chain; its full sequence is PGR5-like protein 1A, chloroplastic (324 aa).

A chloroplast-targeting transit peptide spans 1–60 (MGSKMLFSLTSPRLFSAVSRKPSSSFSPSPPSPSSRTQWTQLSPGKSISLRRRVFLLPAK). A disordered region spans residues 16 to 42 (SAVSRKPSSSFSPSPPSPSSRTQWTQL). Over 61–198 (ATTEQSGPVG…KVYSDLAVDY (138 aa)) the chain is Stromal. Residues C82 and C183 are joined by a disulfide bond. Residues 199–219 (FKMLLLNVPATVVALGLFFFL) traverse the membrane as a helical segment. Over 220–236 (DDITGFEITYIMELPEP) the chain is Lumenal, thylakoid. A helical membrane pass occupies residues 237–257 (YSFIFTWFAAVPVIVYLALSI). Over 258–324 (TKLIIKDFLI…LITLPEGSQA (67 aa)) the chain is Stromal.

This sequence belongs to the PGR5 family. Homodimer and heterodimer with PGR5. Interacts with PGR5, FD2, petC, psaD1, LFNR1 and LFNR2. Also interacts with a Fe-containing cofactor (FCC). Post-translationally, disulfide bonds; Cys-300 and Cys-303 are probably involved in the formation of disulfide bridges with 'Cys-11' and 'Cys-105' of PGR5 while Cys-272 and Cys-275 are probably involved in the binding of a Fe-containing cofactor (FCC).

It is found in the plastid. Its subcellular location is the chloroplast thylakoid membrane. With respect to regulation, inhibited by antimycin A. Ferredoxin-plastoquinone reductase involved in cyclic electron flow (CEF) around photosystem I. The homodimer is probably not involved in CEF. The polypeptide is PGR5-like protein 1A, chloroplastic (PGRL1A) (Arabidopsis thaliana (Mouse-ear cress)).